The primary structure comprises 545 residues: MTTNYIFVTGGVVSSLGKGIAAASLAAILEARGLNVTIMKLDPYINVDPGTMSPIQHGEVFVTEDGAETDLDLGHYERFIRTKMSRRNNFTTGRIYSDVLRKERRGDYLGATIQVIPHITNAIKERIIEGGEDHDVVLVEIGGTVGDIESLPFLEAIRQMAVEVGREHTLYMHLTLVPYMAASGEVKTKPTQHSVKELLSIGIQPDVLICRSDRSVPNNERAKIALFCNVPEKAVISLKDVDSIYKIPALLKSQGLDDYICKRFGLNCPEADLSEWEQVIYQQANPVGEVTIGMVGKYIALPDAYKSVIEALKHAGLKNRLTVNIRLIDSQDVETRGVEILKDLDAILIPGGFGYRGVEGKILTAQYAREQNIPYLGICLGMQVALIEFARHVAGMQDANSTEFVPDCKYPVVALITEWRDEDGNVEMRSEQSHLGGTMRLGSQLCHLADDSLARSLYGEATILERHRHRYEVNNMLLKHLESAGLRVAGWSGDHKLVEIIEYPDHPWFVASQFHPEFTSTPRDGHPLFAGLVKAAGEYQKRAQK.

An amidoligase domain region spans residues Met-1–Leu-266. Ser-14 is a binding site for CTP. A UTP-binding site is contributed by Ser-14. ATP-binding positions include Ser-15–Ile-20 and Asp-72. Residues Asp-72 and Glu-140 each contribute to the Mg(2+) site. CTP-binding positions include Asp-147–Glu-149, Lys-187–Gln-192, and Lys-223. Residues Lys-187–Gln-192 and Lys-223 contribute to the UTP site. Lys-239–Val-241 serves as a coordination point for ATP. The Glutamine amidotransferase type-1 domain occupies Thr-291 to Arg-542. Residue Gly-352 participates in L-glutamine binding. The active-site Nucleophile; for glutamine hydrolysis is Cys-379. L-glutamine-binding positions include Leu-380–Gln-383, Glu-403, and Arg-470. Catalysis depends on residues His-515 and Glu-517.

The protein belongs to the CTP synthase family. As to quaternary structure, homotetramer.

The catalysed reaction is UTP + L-glutamine + ATP + H2O = CTP + L-glutamate + ADP + phosphate + 2 H(+). It carries out the reaction L-glutamine + H2O = L-glutamate + NH4(+). The enzyme catalyses UTP + NH4(+) + ATP = CTP + ADP + phosphate + 2 H(+). It participates in pyrimidine metabolism; CTP biosynthesis via de novo pathway; CTP from UDP: step 2/2. With respect to regulation, allosterically activated by GTP, when glutamine is the substrate; GTP has no effect on the reaction when ammonia is the substrate. The allosteric effector GTP functions by stabilizing the protein conformation that binds the tetrahedral intermediate(s) formed during glutamine hydrolysis. Inhibited by the product CTP, via allosteric rather than competitive inhibition. Catalyzes the ATP-dependent amination of UTP to CTP with either L-glutamine or ammonia as the source of nitrogen. Regulates intracellular CTP levels through interactions with the four ribonucleotide triphosphates. In Sodalis glossinidius (strain morsitans), this protein is CTP synthase.